Here is a 375-residue protein sequence, read N- to C-terminus: MFISEIQLKNYRNYEKLELSFEDKVNVIIGENAQGKTNLMEAIYVLAMAKSHRTSNDRELIRWDEDFGQIKGKLQKRNSSLSLELNISKKGKKAKLNQLEQQKLSQYIGVMNVVMFAPEDLNLVKGSPQVRRRFLDMELGQIAPVYLYELSQYQKVLTQRNHLLKKMQGNSKNEETMLDVFTLQLIEHGAKILQKRFEFLHLLQEWAAPIHRGISRGLEELEIVYKPSVDVSESMDLSKIKEVYYESFQSVKQREIFRGTTLIGPHRDDLQFFVNSKNVQVFGSQGQQRTTALSLKLAEIELIYSEVKEYPILLLDDVLSELDDYRQSHLLNTIQGKVQTFVTTTSVDGIEHETLKEAKTIHVTNGTVDCEIDRE.

30-37 is an ATP binding site; sequence GENAQGKT.

Belongs to the RecF family.

The protein resides in the cytoplasm. Its function is as follows. The RecF protein is involved in DNA metabolism; it is required for DNA replication and normal SOS inducibility. RecF binds preferentially to single-stranded, linear DNA. It also seems to bind ATP. In Bacillus cereus (strain B4264), this protein is DNA replication and repair protein RecF.